Consider the following 347-residue polypeptide: MSSDISEKIQQARRDAESMKEQIRANRDVMNDTTLKTFTRDLPGLPKMEGKIKVRRNLKGHLAKIYAMHWAEDNVHLVSASQDGKLLVWDGLTTNKVHAIPLRSSWVMTCAYSPTANFVACGGLDNICSIYNLRSREQPIRVCRELNSHTGYLSCCRFLNDRQIVTSSGDMTCILWDVENGTKITEFSDHNGDVMSVSVSPDKNYFISGACDATAKLWDLRSGKCVQTFTGHEADINAVQYFPNGLSFGTGSDDASCRLFDIRADRELMQYTHDNILCGITSVGFSFSGRFLFAGYDDFTCNVWDTLKGERVLSLTGHGNRVSCLGVPTDGMALCTGSWDSLLKIWA.

WD repeat units follow at residues 60-90, 102-132, 148-177, 189-219, 231-261, 275-305, and 317-347; these read GHLA…LVWD, LRSS…SIYN, SHTG…ILWD, DHNG…KLWD, GHEA…RLFD, NILC…NVWD, and GHGN…KIWA.

It belongs to the WD repeat G protein beta family. In terms of assembly, g proteins are composed of 3 units, alpha, beta and gamma. Interacts with gpgA, and this requires phlp1.

The protein resides in the cytoplasm. It localises to the cell membrane. Guanine nucleotide-binding proteins (G proteins) are involved as a modulator or transducer in various transmembrane signaling systems. The beta and gamma chains are required for the GTPase activity, for replacement of GDP by GTP, and for G protein-effector interaction. Required for normal chemotaxis in response to cAMP and for aggregation during scorocarp development. This Dictyostelium discoideum (Social amoeba) protein is Guanine nucleotide-binding protein subunit beta (gpbA).